An 805-amino-acid polypeptide reads, in one-letter code: Hypoxia-inducible factor 1-alpha (805 aa).

Positions 1–26 (MEGSVVVSEKKRISSERRKEKSRDAA) are disordered. Residues 8 to 26 (SEKKRISSERRKEKSRDAA) show a composition bias toward basic and acidic residues. A bHLH domain is found at 17–70 (RRKEKSRDAARCRRSNESEVFYELSHELPLPHNVSSHLDKASIMRLDHQLPAVE). 2 consecutive PAS domains span residues 85 to 157 (DKQL…PAKK) and 229 to 300 (PHPS…TKGQ). Residues 303 to 346 (TGQYRMLAKKGGYVWVETQATVIYNSKNSQPQCIVCVNYVLSEV) form the PAC domain. A 4-hydroxyproline mark is found at proline 404 and proline 560. Positions 628–669 (KESTSAPVSPYNGNRSRTSSPVRPAKAVVDKTEKSRPGTPNL) are disordered. Residues 629-648 (ESTSAPVSPYNGNRSRTSSP) show a composition bias toward polar residues. Asparagine 782 is subject to (3S)-3-hydroxyasparagine.

As to quaternary structure, efficient DNA binding requires heterodimerization of an alpha and a beta/ARNT subunit. Post-translationally, in normoxia, is hydroxylated on Pro-404 and Pro-560. The hydroxylated prolines promote interaction with VHL, initiating rapid ubiquitination and subsequent proteasomal degradation. Under hypoxia, proline hydroxylation is impaired and ubiquitination is attenuated, resulting in stabilization. In normoxia, is hydroxylated on Asn-782, thus abrogating interaction with CREBBP and EP300 and preventing transcriptional activation. In terms of processing, the iron and 2-oxoglutarate dependent 3-hydroxylation of asparagine is (S) stereospecific within HIF CTAD domains.

Its subcellular location is the cytoplasm. The protein resides in the nucleus. It is found in the nucleus speckle. With respect to regulation, induced by reactive oxygen species (ROS). Its function is as follows. Functions as a master transcriptional regulator of the adaptive response to hypoxia. Under hypoxic conditions, activates the transcription of over 40 genes, including erythropoietin, glucose transporters, glycolytic enzymes, vascular endothelial growth factor, HILPDA, and other genes whose protein products increase oxygen delivery or facilitate metabolic adaptation to hypoxia. Plays an essential role in embryonic vascularization, tumor angiogenesis and pathophysiology of ischemic disease. This is Hypoxia-inducible factor 1-alpha (hif1a) from Xenopus laevis (African clawed frog).